Reading from the N-terminus, the 428-residue chain is Serine--tRNA ligase (428 aa).

Residue 235–237 (TAE) participates in L-serine binding. Residue 266 to 268 (RSE) coordinates ATP. Glu289 lines the L-serine pocket. ATP is bound at residue 353–356 (EISS). Ser389 serves as a coordination point for L-serine.

This sequence belongs to the class-II aminoacyl-tRNA synthetase family. Type-1 seryl-tRNA synthetase subfamily. Homodimer. The tRNA molecule binds across the dimer.

It is found in the cytoplasm. It carries out the reaction tRNA(Ser) + L-serine + ATP = L-seryl-tRNA(Ser) + AMP + diphosphate + H(+). It catalyses the reaction tRNA(Sec) + L-serine + ATP = L-seryl-tRNA(Sec) + AMP + diphosphate + H(+). It functions in the pathway aminoacyl-tRNA biosynthesis; selenocysteinyl-tRNA(Sec) biosynthesis; L-seryl-tRNA(Sec) from L-serine and tRNA(Sec): step 1/1. Catalyzes the attachment of serine to tRNA(Ser). Is also able to aminoacylate tRNA(Sec) with serine, to form the misacylated tRNA L-seryl-tRNA(Sec), which will be further converted into selenocysteinyl-tRNA(Sec). The sequence is that of Serine--tRNA ligase from Shewanella loihica (strain ATCC BAA-1088 / PV-4).